A 685-amino-acid polypeptide reads, in one-letter code: DNA ligase (685 aa).

Residues 47-51 (DSEYD), 96-97 (SL), and glutamate 125 each bind NAD(+). The N6-AMP-lysine intermediate role is filled by lysine 127. 4 residues coordinate NAD(+): arginine 148, glutamate 185, lysine 304, and lysine 328. Residues cysteine 422, cysteine 425, cysteine 440, and cysteine 446 each coordinate Zn(2+). The BRCT domain maps to 605 to 685 (ADAQPLKGQT…ELLALLAANA (81 aa)).

The protein belongs to the NAD-dependent DNA ligase family. LigA subfamily. It depends on Mg(2+) as a cofactor. Mn(2+) is required as a cofactor.

The catalysed reaction is NAD(+) + (deoxyribonucleotide)n-3'-hydroxyl + 5'-phospho-(deoxyribonucleotide)m = (deoxyribonucleotide)n+m + AMP + beta-nicotinamide D-nucleotide.. DNA ligase that catalyzes the formation of phosphodiester linkages between 5'-phosphoryl and 3'-hydroxyl groups in double-stranded DNA using NAD as a coenzyme and as the energy source for the reaction. It is essential for DNA replication and repair of damaged DNA. In Shewanella baltica (strain OS195), this protein is DNA ligase.